Reading from the N-terminus, the 324-residue chain is Membrane protein UL8 (324 aa).

The immunoglobulin V-like domain stretch occupies residues 36-138 (ILESIIYVSG…LWYNLTVKPK (103 aa)). Residues 278–298 (THYSWMLIIAIILIIFIIICL) traverse the membrane as a helical segment.

This sequence belongs to the RL11 family. Post-translationally, highly glycosylated.

It localises to the host cell membrane. Its function is as follows. Plays a role in the inhibition of pro-inflammatory cytokine production. This effect is mediated by the conserved Ig-like domain. This Homo sapiens (Human) protein is Membrane protein UL8 (UL8).